A 677-amino-acid chain; its full sequence is Collagen alpha-2(IX) chain (677 aa).

The N-terminal stretch at 1 to 21 (MAHRSPALCLLLLHAACLCLA) is a signal peptide. Residues 25–161 (GPPGEPGPRG…PGKPGPPGHI (137 aa)) are triple-helical region 4 (COL4). Residues 28 to 41 (GEPGPRGPPGPPGV) show a composition bias toward pro residues. The tract at residues 28–516 (GEPGPRGPPG…MPGQRGVAGR (489 aa)) is disordered. Residues 53–66 (SPGAPGSPGAKGEP) are compositionally biased toward low complexity. A compositionally biased stretch (pro residues) spans 68 to 77 (APGPDGPPGK). Over residues 91 to 100 (GPWGGQGLKG) the composition is skewed to gly residues. Pro residues-rich tracts occupy residues 104–121 (LPGP…PPGL) and 137–158 (KGDP…PGPP). P158 bears the 4-hydroxyproline mark. The interval 162–178 (QGVEGSADFLCPTNCPP) is nonhelical region 4 (NC4). Residue S167 is glycosylated (O-linked (Xyl...) (glycosaminoglycan) serine). Residue P178 is modified to 4-hydroxyproline. The tract at residues 179-517 (GPKGPQGLQG…PGQRGVAGRD (339 aa)) is triple-helical region 3 (COL3). A 5-hydroxylysine modification is found at K181. O-linked (Gal...) hydroxylysine glycosylation is present at K181. Position 190 is an allysine (K190). Composition is skewed to low complexity over residues 363 to 382 (TPGL…AGVP), 430 to 442 (PGKT…TGDP), and 496 to 505 (RGLLGERGVP). Positions 518-547 (AGDQHIIDVVLKMMQEQLAEVAVSAKRAAL) are nonhelical region 3 (NC3). The triple-helical region 2 (COL2) stretch occupies residues 548 to 630 (GGVGAMGPPG…PGLPGIPGHA (83 aa)). The disordered stretch occupies residues 550–657 (VGAMGPPGPP…GRPGSPGPAG (108 aa)). Over residues 555–565 (PPGPPGPPGPP) the composition is skewed to pro residues. Basic and acidic residues predominate over residues 597 to 609 (KRGEKGERGDTGR). A nonhelical region 2 (NC2) region spans residues 631 to 632 (LA). Positions 633 to 662 (GKDGERGPPGVPGDAGRPGSPGPAGLPGFC) are triple-helical region 1 (COL1). Residues 663 to 677 (EPAACLGALPTPRHG) form a nonhelical region 1 (NC1) region.

It belongs to the fibril-associated collagens with interrupted helices (FACIT) family. As to quaternary structure, heterotrimer of an alpha 1(IX), an alpha 2(IX) and an alpha 3(IX) chain. The chains are linked to each other by interchain disulfide bonds. Trimers are also cross-linked via hydroxylysines. Covalently linked to the telopeptides of type II collagen by lysine-derived cross-links. Post-translationally, prolines at the third position of the tripeptide repeating unit (G-X-Y) are hydroxylated in some or all of the chains.

The protein resides in the secreted. Its subcellular location is the extracellular space. It localises to the extracellular matrix. In terms of biological role, structural component of hyaline cartilage and vitreous of the eye. This is Collagen alpha-2(IX) chain (COL9A2) from Gallus gallus (Chicken).